We begin with the raw amino-acid sequence, 188 residues long: Transcription factor FapR (188 aa).

Belongs to the FapR family.

Functionally, transcriptional factor involved in regulation of membrane lipid biosynthesis by repressing genes involved in fatty acid and phospholipid metabolism. The polypeptide is Transcription factor FapR (Bacillus licheniformis (strain ATCC 14580 / DSM 13 / JCM 2505 / CCUG 7422 / NBRC 12200 / NCIMB 9375 / NCTC 10341 / NRRL NRS-1264 / Gibson 46)).